A 142-amino-acid chain; its full sequence is MRNYDLSPLLRQWIGFDKLANALQTAGESQSFPPYNIEKSDDNHYRITLALAGFRQEDLDIQLEGTRLVVKGTPQQPEKETTWLHQGLVSQAFSLSFTLADNMEVSGATFTNGLLHIDLTRNEPEQIAPQRIAISERPALNS.

Positions 26–137 constitute a sHSP domain; it reads AGESQSFPPY…APQRIAISER (112 aa).

The protein belongs to the small heat shock protein (HSP20) family. Homodimer. Forms homomultimers of about 100-150 subunits at optimal growth temperatures. Conformation changes to oligomers at high temperatures or high ionic concentrations. The decrease in size of the multimers is accompanied by an increase in chaperone activity.

It localises to the cytoplasm. Associates with aggregated proteins, together with IbpA, to stabilize and protect them from irreversible denaturation and extensive proteolysis during heat shock and oxidative stress. Aggregated proteins bound to the IbpAB complex are more efficiently refolded and reactivated by the ATP-dependent chaperone systems ClpB and DnaK/DnaJ/GrpE. Its activity is ATP-independent. This Klebsiella pneumoniae (strain 342) protein is Small heat shock protein IbpB.